Here is a 180-residue protein sequence, read N- to C-terminus: Shikimate kinase (180 aa).

14-19 provides a ligand contact to ATP; sequence GAGKSC. Ser-18 provides a ligand contact to Mg(2+). 3 residues coordinate substrate: Asp-36, Arg-60, and Gly-82. Arg-120 contributes to the ATP binding site. Residue Arg-139 participates in substrate binding.

Belongs to the shikimate kinase family. Monomer. It depends on Mg(2+) as a cofactor.

The protein resides in the cytoplasm. The enzyme catalyses shikimate + ATP = 3-phosphoshikimate + ADP + H(+). It participates in metabolic intermediate biosynthesis; chorismate biosynthesis; chorismate from D-erythrose 4-phosphate and phosphoenolpyruvate: step 5/7. Functionally, catalyzes the specific phosphorylation of the 3-hydroxyl group of shikimic acid using ATP as a cosubstrate. The sequence is that of Shikimate kinase from Xanthomonas axonopodis pv. citri (strain 306).